The primary structure comprises 184 residues: Glutathione-regulated potassium-efflux system ancillary protein KefG (184 aa).

This sequence belongs to the NAD(P)H dehydrogenase (quinone) family. KefG subfamily. In terms of assembly, interacts with KefB.

The protein resides in the cell inner membrane. It catalyses the reaction a quinone + NADH + H(+) = a quinol + NAD(+). The catalysed reaction is a quinone + NADPH + H(+) = a quinol + NADP(+). Functionally, regulatory subunit of a potassium efflux system that confers protection against electrophiles. Required for full activity of KefB. The sequence is that of Glutathione-regulated potassium-efflux system ancillary protein KefG from Escherichia coli O8 (strain IAI1).